A 148-amino-acid polypeptide reads, in one-letter code: Puroindoline-A (148 aa).

A signal peptide spans M1–A19. The propeptide occupies Q20 to Y28. The propeptide at Y147–W148 is removed in mature form.

In terms of processing, five disulfide bonds are present. Endosperm and aleurone layer of developing kernels. In the aleurone layer, mainly localized to starch granules and the surface of the plasma membrane, forming a uniform layer, also abundant in the intercellular space. In the endosperm, mainly localized to starch granules and the plasma membrane, but less abundant in the intercellular space. Not found in roots or coleoptiles.

Its subcellular location is the membrane. It localises to the secreted. The protein localises to the extracellular space. Functionally, acts as a membranotoxin, probably through its antibacterial and antifungal activities, contributing to the defense mechanism of the plant against predators. Forms monovalent cation-selective ion channels in membranes. Has antibacterial activity against the Gram-positive bacteria S.aureus and C.michiganensis, and the Gram-negative bacteria E.coli, P.syringae pv phaseoli, A.tumefaciens and E.carotovora subsp carotovora. Acts synergistically with PINB against bacteria. Contributes to grain texture and hardness. This is Puroindoline-A (PINA) from Triticum aestivum (Wheat).